The chain runs to 370 residues: Aspartate beta-hydroxylase domain-containing protein 2 (370 aa).

Residues 1 to 57 (MVWALPRTSSPSCIAPSYKPDSGWIKMSAEWLIDWSCLLNGLRDLIAGCIQAVRDCN) lie on the Cytoplasmic side of the membrane. A helical transmembrane segment spans residues 58–78 (SFALTTVICLLMLFAWYCYRV). Over 79-370 (GKDQPRSPFA…ALDSIFAPGR (292 aa)) the chain is Lumenal. The N-linked (GlcNAc...) asparagine glycan is linked to asparagine 212. Tryptophan 229 and serine 273 together coordinate 2-oxoglutarate. Residue histidine 284 participates in Fe cation binding. Position 293-295 (293-295 (RCH)) interacts with 2-oxoglutarate. Histidine 329 contributes to the Fe cation binding site. Arginine 342 serves as a coordination point for 2-oxoglutarate.

This sequence belongs to the aspartyl/asparaginyl beta-hydroxylase family. The cofactor is Fe cation.

Its subcellular location is the membrane. Functionally, may function as 2-oxoglutarate-dependent dioxygenase. The chain is Aspartate beta-hydroxylase domain-containing protein 2 (asphd2) from Xenopus tropicalis (Western clawed frog).